A 279-amino-acid chain; its full sequence is Ribosomal RNA small subunit methyltransferase A (279 aa).

Residues Asn28, Leu30, Gly55, Glu77, Asp103, and Asn122 each coordinate S-adenosyl-L-methionine.

It belongs to the class I-like SAM-binding methyltransferase superfamily. rRNA adenine N(6)-methyltransferase family. RsmA subfamily.

It localises to the cytoplasm. The enzyme catalyses adenosine(1518)/adenosine(1519) in 16S rRNA + 4 S-adenosyl-L-methionine = N(6)-dimethyladenosine(1518)/N(6)-dimethyladenosine(1519) in 16S rRNA + 4 S-adenosyl-L-homocysteine + 4 H(+). Specifically dimethylates two adjacent adenosines (A1518 and A1519) in the loop of a conserved hairpin near the 3'-end of 16S rRNA in the 30S particle. May play a critical role in biogenesis of 30S subunits. The sequence is that of Ribosomal RNA small subunit methyltransferase A from Ruegeria pomeroyi (strain ATCC 700808 / DSM 15171 / DSS-3) (Silicibacter pomeroyi).